A 60-amino-acid chain; its full sequence is Large ribosomal subunit protein bL32 (60 aa).

The segment covering 1-23 (MAKHPVPKKKTSKSKRDMRRSHH) has biased composition (basic residues). The interval 1 to 26 (MAKHPVPKKKTSKSKRDMRRSHHALT) is disordered.

The protein belongs to the bacterial ribosomal protein bL32 family.

The polypeptide is Large ribosomal subunit protein bL32 (Deinococcus deserti (strain DSM 17065 / CIP 109153 / LMG 22923 / VCD115)).